The chain runs to 328 residues: Protein chibby homolog 2 (328 aa).

The disordered stretch occupies residues 180-231 (NKGASSVQKDTENTTAAGEGSLGPTCQEEHDAKEESTTPTQNDTKIAPSTED). The segment covering 182–195 (GASSVQKDTENTTA) has biased composition (polar residues). Basic and acidic residues predominate over residues 206–215 (QEEHDAKEES). Positions 259–307 (RESLHALQDESKFFQEEYKKLKLQLNNVKNTVSDITTQMEMLEKELIAI) form a coiled coil.

Belongs to the chibby family. SPERT subfamily.

The sequence is that of Protein chibby homolog 2 (CBY2) from Gallus gallus (Chicken).